Consider the following 723-residue polypeptide: Catalase-peroxidase (723 aa).

Positions 97–225 (WHAAGSYRVT…LAAVQMGLIY (129 aa)) form a cross-link, tryptophyl-tyrosyl-methioninium (Trp-Tyr) (with M-251). The active-site Proton acceptor is histidine 98. Residues 225–251 (YVNPEGVNGKSDPLATAAQMRETFARM) constitute a cross-link (tryptophyl-tyrosyl-methioninium (Tyr-Met) (with W-97)). Position 266 (histidine 266) interacts with heme b.

The protein belongs to the peroxidase family. Peroxidase/catalase subfamily. Homodimer or homotetramer. The cofactor is heme b. In terms of processing, formation of the three residue Trp-Tyr-Met cross-link is important for the catalase, but not the peroxidase activity of the enzyme.

The enzyme catalyses H2O2 + AH2 = A + 2 H2O. It carries out the reaction 2 H2O2 = O2 + 2 H2O. Bifunctional enzyme with both catalase and broad-spectrum peroxidase activity. Involved in tumorigenesis. In Rhizobium radiobacter (Agrobacterium tumefaciens), this protein is Catalase-peroxidase.